A 432-amino-acid chain; its full sequence is Histidine--tRNA ligase (432 aa).

The disordered stretch occupies residues 412-432 (TQVPLAAFPPEEGRPTYDDYA). Over residues 422–432 (EEGRPTYDDYA) the composition is skewed to basic and acidic residues.

It belongs to the class-II aminoacyl-tRNA synthetase family.

The protein localises to the cytoplasm. It catalyses the reaction tRNA(His) + L-histidine + ATP = L-histidyl-tRNA(His) + AMP + diphosphate + H(+). This Natronomonas pharaonis (strain ATCC 35678 / DSM 2160 / CIP 103997 / JCM 8858 / NBRC 14720 / NCIMB 2260 / Gabara) (Halobacterium pharaonis) protein is Histidine--tRNA ligase.